Reading from the N-terminus, the 363-residue chain is MLTTPNPDLCVEPFIEPSQWFFTLVEMILAVGGLIMNTNITVICHKASPMPHPQRRLLASISINFAILSGFQLARNFFLFLVMQQPCLNQVTTVSCKLQQFPLIFCYIHCAASFFLLGVQSNFLKLKPIDKSPMKWYLSCSVWQSTIAAVCVALSLLFTAFDQDLENEPMNKCSILLAVSQSYLTFSLLTLLILLHATGLIFIMLASVLQRDKKSWISFTIFSLKEIFKYETLAWQISLFISGCVVLYRHVLRESCDECAVIVLELAFLIVPLLISFMHPLYLIWYVLPMRDAATRTFPCMLSALPEYSLVPPQVPSASTSATFAIQSPRADLTPNDTLHMESKKKPLSQSPRVVIEEEDVAE.

7 helical membrane passes run 20-40, 63-83, 101-121, 141-161, 186-206, 227-247, and 268-288; these read WFFTLVEMILAVGGLIMNTNI, INFAILSGFQLARNFFLFLVM, FPLIFCYIHCAASFFLLGVQS, SVWQSTIAAVCVALSLLFTAF, FSLLTLLILLHATGLIFIMLA, IFKYETLAWQISLFISGCVVL, and FLIVPLLISFMHPLYLIWYVL. The interval 329 to 363 is disordered; sequence PRADLTPNDTLHMESKKKPLSQSPRVVIEEEDVAE.

It localises to the membrane. This is an uncharacterized protein from Caenorhabditis elegans.